We begin with the raw amino-acid sequence, 117 residues long: NADPH-dependent 7-cyano-7-deazaguanine reductase (117 aa).

Catalysis depends on cysteine 31, which acts as the Thioimide intermediate. Aspartate 38 serves as the catalytic Proton donor. Substrate is bound by residues 53–55 and 72–73; these read IEL and YE.

It belongs to the GTP cyclohydrolase I family. QueF type 1 subfamily.

It localises to the cytoplasm. The enzyme catalyses 7-aminomethyl-7-carbaguanine + 2 NADP(+) = 7-cyano-7-deazaguanine + 2 NADPH + 3 H(+). It participates in tRNA modification; tRNA-queuosine biosynthesis. Catalyzes the NADPH-dependent reduction of 7-cyano-7-deazaguanine (preQ0) to 7-aminomethyl-7-deazaguanine (preQ1). The sequence is that of NADPH-dependent 7-cyano-7-deazaguanine reductase from Chlorobaculum tepidum (strain ATCC 49652 / DSM 12025 / NBRC 103806 / TLS) (Chlorobium tepidum).